Here is a 772-residue protein sequence, read N- to C-terminus: Carnitine O-palmitoyltransferase 1, muscle isoform (772 aa).

Topologically, residues 1-47 (MAEAHQAVAFQFTVTPEGVDFRLSREALKHIYLSGINSWKKRLIRIK) are cytoplasmic. Residues 48-73 (NGILRGVYPGSPTSWLVVASATAGSS) traverse the membrane as a helical segment. Over 74–102 (YYNVDISMGLVNHIQRCLPERYGPYWTPQ) the chain is Mitochondrial intermembrane. Residues 103–122 (TRALLSMAVVSTGVWMIGIF) traverse the membrane as a helical segment. Residues 123–772 (FFRQTLKLLL…DLFQVPKTDS (650 aa)) are Cytoplasmic-facing. The active-site Proton acceptor is H473. 555 to 567 (GKGLIKKCRTSPD) contributes to the CoA binding site. Residues Y589 and T602 each contribute to the (R)-carnitine site.

Belongs to the carnitine/choline acetyltransferase family.

The protein localises to the mitochondrion outer membrane. It carries out the reaction (R)-carnitine + hexadecanoyl-CoA = O-hexadecanoyl-(R)-carnitine + CoA. The protein operates within lipid metabolism; fatty acid beta-oxidation. Functionally, catalyzes the transfer of the acyl group of long-chain fatty acid-CoA conjugates onto carnitine, an essential step for the mitochondrial uptake of long-chain fatty acids and their subsequent beta-oxidation in the mitochondrion. This Sus scrofa (Pig) protein is Carnitine O-palmitoyltransferase 1, muscle isoform (CPT1B).